The chain runs to 527 residues: ATP-dependent RNA helicase DBP3 (527 aa).

The span at 1–11 (MSKDHKDKKRK) shows a compositional bias: basic residues. Positions 1–89 (MSKDHKDKKR…TGYSQSPALT (89 aa)) are disordered. Residues 12 to 24 (HSDEATEEVEKKT) are compositionally biased toward basic and acidic residues. Positions 25–44 (KVSKKEKKDKKEKKEKKDKK) are enriched in basic residues. The segment covering 45–71 (EKKDKSEKKDKSEKKEKKEKKESEDVP) has biased composition (basic and acidic residues). Positions 72–89 (TKSSAVVSTGYSQSPALT) are enriched in polar residues. Residues 119-145 (LGFDQIDLDSRIASVISKFPTPTPIQA) carry the Q motif motif. Positions 148 to 319 (WPYLLSGKDV…STFMNSPVKV (172 aa)) constitute a Helicase ATP-binding domain. 161–168 (AETGSGKT) contacts ATP. The DEAD box motif lies at 266–269 (DEAD). A Helicase C-terminal domain is found at 348–497 (KLLSLLRKYQ…PVPDELLKFG (150 aa)).

The protein belongs to the DEAD box helicase family. DDX5/DBP2 subfamily.

Its subcellular location is the nucleus. It localises to the nucleolus. It catalyses the reaction ATP + H2O = ADP + phosphate + H(+). In terms of biological role, ATP-dependent RNA helicase required for 60S ribosomal subunit synthesis. Involved in efficient pre-rRNA processing, predominantly at site A3, which is necessary for the normal formation of 25S and 5.8S rRNAs. This chain is ATP-dependent RNA helicase DBP3 (DBP3), found in Debaryomyces hansenii (strain ATCC 36239 / CBS 767 / BCRC 21394 / JCM 1990 / NBRC 0083 / IGC 2968) (Yeast).